We begin with the raw amino-acid sequence, 410 residues long: LL-diaminopimelate aminotransferase (410 aa).

Positions 15 and 42 each coordinate substrate. Pyridoxal 5'-phosphate is bound by residues Y72, 108-109 (SK), Y132, N187, Y218, and 246-248 (SFS). Residues K109, Y132, and N187 each coordinate substrate. The residue at position 249 (K249) is an N6-(pyridoxal phosphate)lysine. Positions 257 and 292 each coordinate pyridoxal 5'-phosphate. N292 and R388 together coordinate substrate.

The protein belongs to the class-I pyridoxal-phosphate-dependent aminotransferase family. LL-diaminopimelate aminotransferase subfamily. Homodimer. It depends on pyridoxal 5'-phosphate as a cofactor.

The enzyme catalyses (2S,6S)-2,6-diaminopimelate + 2-oxoglutarate = (S)-2,3,4,5-tetrahydrodipicolinate + L-glutamate + H2O + H(+). It functions in the pathway amino-acid biosynthesis; L-lysine biosynthesis via DAP pathway; LL-2,6-diaminopimelate from (S)-tetrahydrodipicolinate (aminotransferase route): step 1/1. Involved in the synthesis of meso-diaminopimelate (m-DAP or DL-DAP), required for both lysine and peptidoglycan biosynthesis. Catalyzes the direct conversion of tetrahydrodipicolinate to LL-diaminopimelate. The chain is LL-diaminopimelate aminotransferase from Geotalea daltonii (strain DSM 22248 / JCM 15807 / FRC-32) (Geobacter daltonii).